The following is a 1056-amino-acid chain: ATP-dependent helicase wrn-1 (1056 aa).

A disordered region spans residues 1–102; that stretch reads MISDDDDLPS…SSSDDSDQGD (102 aa). 2 tandem repeats follow at residues 17–26 and 28–37. The interval 17–37 is 2 X 10 AA repeats of N-[ED]-E-L-P-E-T-E-P-E; the sequence is NEELPETEPEDNDELPETEPE. Over residues 19 to 38 the composition is skewed to acidic residues; the sequence is ELPETEPEDNDELPETEPES. Residues 43 to 53 show a composition bias toward polar residues; it reads PTVTSNKTENQ. Acidic residues predominate over residues 54–63; that stretch reads VADEDYDSFD. A Helicase ATP-binding domain is found at 236–406; that stretch reads VRNVLGGKDQ…IANLRLRKPL (171 aa). 249–256 is a binding site for ATP; the sequence is MSTGYGKS. The short motif at 348–351 is the DEAH box element; the sequence is DEAH. Residues 427-583 form the Helicase C-terminal domain; it reads MAEDLGLFMK…NLTMMLRQLE (157 aa). Residues Cys591, Cys614, Cys615, and Cys618 each contribute to the Zn(2+) site. The interval 749 to 771 is disordered; it reads KEKAAPSTVPGASRSQSTKSSTE. The span at 761 to 771 shows a compositional bias: polar residues; it reads SRSQSTKSSTE. An HRDC domain is found at 806 to 886; it reads PEKIDQLRSR…VQFSKETGIA (81 aa). The tract at residues 1018–1056 is disordered; the sequence is QEKPDIQSMPSTSNPSTIKTVPSTPSSSLRAPPLKKFKL. A compositionally biased stretch (polar residues) spans 1025-1046; the sequence is SMPSTSNPSTIKTVPSTPSSSL.

The protein belongs to the helicase family. RecQ subfamily. The cofactor is Zn(2+).

It is found in the nucleus. It catalyses the reaction Couples ATP hydrolysis with the unwinding of duplex DNA by translocating in the 3'-5' direction.. It carries out the reaction ATP + H2O = ADP + phosphate + H(+). In terms of biological role, essential for the formation of DNA replication focal centers; stably associates with foci elements generating binding sites for RP-A. Exhibits a magnesium-dependent ATP-dependent 3'-5' DNA-helicase activity. May be involved in the control of genomic stability. The protein is ATP-dependent helicase wrn-1 (wrn-1) of Caenorhabditis elegans.